The following is a 193-amino-acid chain: Small ribosomal subunit protein eS7 (193 aa).

Belongs to the eukaryotic ribosomal protein eS7 family.

This is Small ribosomal subunit protein eS7 (rps7) from Dictyostelium discoideum (Social amoeba).